We begin with the raw amino-acid sequence, 754 residues long: ToMV susceptible protein tm-1(GCR26) (754 aa).

The interval 1–201 (MATAQSNSPR…AGMVIGRLES (201 aa)) is N-terminal inhibitory domain NN. Residues 18–20 (DTK), T55, R92, and 124–127 (GSGG) contribute to the ATP site. Residues 211–431 (KFTVGVTMFG…VDSFLEMSPK (221 aa)) are N-terminal inhibitory domain NC.

It belongs to the UPF0261 family. Homodimer. In terms of assembly, (Microbial infection) Binds, via an ATP bridge, to the tobamoviruses avirulent (Avr) replication proteins (large and small subunits, e.g. tobacco mild green mosaic virus (TMGMV) AC P18339 and pepper mild mottle virus (PMMoV) AC P89657) to inhibit their function after the translation of tobamoviruses RNA, but before the viral replication complex formation on the membrane surfaces; this interaction is not possible with resistance-breaking strains replication proteins.

Its function is as follows. Inhibitor of viral RNA replication which confers resistance to some tobamoviruses including tobacco mild green mosaic virus (TMGMV) and pepper mild mottle virus (PMMoV), but not to tomato mosaic virus (ToMV strains L, ToMV0 and ToMV1-2) and tobacco mosaic virus (TMV). Prevents tobamoviruses RNA replication by affecting the association of tobamoviruses replication proteins (large and small subunits) with host membrane-associated proteins (e.g. TOM1, TOM2A and ARL8), thus inhibiting the replication complex formation on the membranes and avoiding viral negative-strand RNA synthesis. The sequence is that of ToMV susceptible protein tm-1(GCR26) from Solanum lycopersicum (Tomato).